The chain runs to 413 residues: CinA-like protein (413 aa).

It belongs to the CinA family.

The chain is CinA-like protein from Geotalea daltonii (strain DSM 22248 / JCM 15807 / FRC-32) (Geobacter daltonii).